The primary structure comprises 441 residues: Cysteine proteinase (441 aa).

C249 and C290 are oxidised to a cystine. Residue C252 is part of the active site. N-linked (GlcNAc...) asparagine glycans are attached at residues N270 and N345. Active-site residues include H381 and N403.

Belongs to the peptidase C1 family.

This Theileria annulata protein is Cysteine proteinase (TACP).